A 361-amino-acid chain; its full sequence is Ribosomal RNA large subunit methyltransferase M (361 aa).

Residues serine 187, cysteine 220 to glycine 223, aspartate 239, aspartate 259, and aspartate 276 contribute to the S-adenosyl-L-methionine site. The active-site Proton acceptor is the lysine 305.

It belongs to the class I-like SAM-binding methyltransferase superfamily. RNA methyltransferase RlmE family. RlmM subfamily. As to quaternary structure, monomer.

It localises to the cytoplasm. It carries out the reaction cytidine(2498) in 23S rRNA + S-adenosyl-L-methionine = 2'-O-methylcytidine(2498) in 23S rRNA + S-adenosyl-L-homocysteine + H(+). In terms of biological role, catalyzes the 2'-O-methylation at nucleotide C2498 in 23S rRNA. The sequence is that of Ribosomal RNA large subunit methyltransferase M from Shewanella sp. (strain W3-18-1).